A 195-amino-acid polypeptide reads, in one-letter code: Thymidine kinase (195 aa).

Residues Gly-15–Ser-22 and Asp-88–Gln-91 each bind ATP. The active-site Proton acceptor is the Glu-89. Zn(2+)-binding residues include Cys-145, Cys-148, Cys-183, and Cys-186.

Belongs to the thymidine kinase family. As to quaternary structure, homotetramer.

Its subcellular location is the cytoplasm. It catalyses the reaction thymidine + ATP = dTMP + ADP + H(+). The polypeptide is Thymidine kinase (Bacillus cereus (strain 03BB102)).